We begin with the raw amino-acid sequence, 878 residues long: Phosphoenolpyruvate carboxylase (878 aa).

Residues histidine 137 and lysine 545 contribute to the active site.

The protein belongs to the PEPCase type 1 family. Mg(2+) is required as a cofactor.

It carries out the reaction oxaloacetate + phosphate = phosphoenolpyruvate + hydrogencarbonate. Forms oxaloacetate, a four-carbon dicarboxylic acid source for the tricarboxylic acid cycle. The chain is Phosphoenolpyruvate carboxylase from Serratia proteamaculans (strain 568).